The following is a 446-amino-acid chain: MTTILENLPAGQKVGIAFSGGLDTSAALHWMRIKGAVPYAYTANLGQPDEDDYDAIPKRAIQYGAEGARLIDCRAQLVAEGIAALQCGAFHISTAGVTYFNTTPIGRAVTGTMLVAAMKEDGVNIWGDGSTYKGNDIERFYRYGLLVNPDLKIYKPWLDQQFIDELGGRAEMSEFMRQAGFEYKMSAEKAYSTDSNLLGATHEAKDLESLESGIKIVNPIMGVAFWRDDVKIDKEAVTVRFEEGRPVALNGVEYKDAVELLLEANRIGGRHGLGMSDQIENRIIEAKSRGIYEAPGLALLYIAYERLVTGIHNEDTIEQYRENGRRLGRLLYQGRWFDPQAIMLRETAQRWVARAVTGEVTVELRRGNDYSILATRSPNLTYQPERLSMEKVQSTFSPRDRIGQLTMRNLDITDTRDKLRIYSEVGLLTPGESSALPKLKEDESGN.

ATP-binding positions include 17–25 (AFSGGLDTS) and alanine 43. Residue tyrosine 99 coordinates L-citrulline. ATP is bound by residues glycine 129 and threonine 131. Residues threonine 131, asparagine 135, and aspartate 136 each contribute to the L-aspartate site. Residue asparagine 135 participates in L-citrulline binding. Aspartate 136 contributes to the ATP binding site. The L-citrulline site is built by arginine 139 and serine 192. Aspartate 194 provides a ligand contact to ATP. L-citrulline is bound by residues threonine 201, glutamate 203, and glutamate 280.

Belongs to the argininosuccinate synthase family. Type 2 subfamily. As to quaternary structure, homotetramer.

It is found in the cytoplasm. The catalysed reaction is L-citrulline + L-aspartate + ATP = 2-(N(omega)-L-arginino)succinate + AMP + diphosphate + H(+). It participates in amino-acid biosynthesis; L-arginine biosynthesis; L-arginine from L-ornithine and carbamoyl phosphate: step 2/3. In Burkholderia thailandensis (strain ATCC 700388 / DSM 13276 / CCUG 48851 / CIP 106301 / E264), this protein is Argininosuccinate synthase.